A 411-amino-acid chain; its full sequence is Serine/threonine transporter SstT (411 aa).

9 helical membrane passes run 14 to 34 (GSLV…ASVA), 43 to 63 (FLGG…VFIL), 82 to 102 (IIML…VMSF), 141 to 161 (ALMS…GFAL), 192 to 212 (IGIF…ALAG), 218 to 238 (AVLL…IVFF), 290 to 310 (IPLG…VLTL), 330 to 350 (VVAA…LLLI), and 357 to 377 (FGIP…IGVI).

Belongs to the dicarboxylate/amino acid:cation symporter (DAACS) (TC 2.A.23) family.

The protein resides in the cell inner membrane. The enzyme catalyses L-serine(in) + Na(+)(in) = L-serine(out) + Na(+)(out). It carries out the reaction L-threonine(in) + Na(+)(in) = L-threonine(out) + Na(+)(out). Its function is as follows. Involved in the import of serine and threonine into the cell, with the concomitant import of sodium (symport system). The polypeptide is Serine/threonine transporter SstT (Photobacterium profundum (strain SS9)).